The chain runs to 502 residues: MKIAVIGAGVTGLAAAARIASQGHEVTIFEKNTNVGGRMNQLKKDGFTFDMGPTIVMMPDVYKDVFTMCGKNYEDYIELRQLRYIYDVYFDRDDRITVPTDLAELQHMLESIEPGSTHGFMSFLTDVYKKYEIARRYFLERTYRKPSDFYNMTSLVQGAKLKTLNHADQLIEHYIDNEKIQKLLAFQTLYIGIDPKRGPSLYSIIPMIEMMFGVHFIKGGMYGMAQGLAQLNKDLGVNIELNAEIEQIIIDPKFKRADAIKVNGDIRKFDKILCTADFPSVAESLMPDFAPIKKYPPHKIADLDYSCSAFLMYIGIDIDVTDQVRLHNVIFSDDFRGNIEEIFEGRLSYDPSIYVYVPAVADKSLAPEGKTGIYVLMPTPELKTGSGIDWSDEALTQQIKEIIYRKLATIEVFEDIKSHIVSETIFTPNDFEQTYHAKFGSAFGLMPTLAQSNYYRPQNVSRDYKDLYFAGASTHPGAGVPIVLTSAKITVDEMVKDIEQGV.

5-17 is an FAD binding site; sequence VIGAGVTGLAAAA.

The protein belongs to the carotenoid/retinoid oxidoreductase family. CrtN subfamily.

It carries out the reaction 15-cis-4,4'-diapophytoene + 3 FAD + 3 H(+) = all-trans-4,4'-diaponeurosporene + 3 FADH2. It participates in carotenoid biosynthesis; staphyloxanthin biosynthesis; staphyloxanthin from farnesyl diphosphate: step 2/5. In terms of biological role, involved in the biosynthesis of the yellow-orange carotenoid staphyloxanthin, which plays a role in the virulence via its protective function against oxidative stress. Catalyzes three successive dehydrogenation reactions that lead to the introduction of three double bonds into 4,4'-diapophytoene (dehydrosqualene), with 4,4'-diapophytofluene and 4,4'-diapo-zeta-carotene as intermediates, and 4,4'-diaponeurosporene (the major deep-yellow pigment in staphylococci strains) as the end product. The chain is 4,4'-diapophytoene desaturase (4,4'-diaponeurosporene-forming) from Staphylococcus aureus (strain bovine RF122 / ET3-1).